Here is a 158-residue protein sequence, read N- to C-terminus: NAD(P)H-quinone oxidoreductase subunit J, chloroplastic (158 aa).

It belongs to the complex I 30 kDa subunit family. NDH is composed of at least 16 different subunits, 5 of which are encoded in the nucleus.

The protein resides in the plastid. It is found in the chloroplast thylakoid membrane. It carries out the reaction a plastoquinone + NADH + (n+1) H(+)(in) = a plastoquinol + NAD(+) + n H(+)(out). The enzyme catalyses a plastoquinone + NADPH + (n+1) H(+)(in) = a plastoquinol + NADP(+) + n H(+)(out). Its function is as follows. NDH shuttles electrons from NAD(P)H:plastoquinone, via FMN and iron-sulfur (Fe-S) centers, to quinones in the photosynthetic chain and possibly in a chloroplast respiratory chain. The immediate electron acceptor for the enzyme in this species is believed to be plastoquinone. Couples the redox reaction to proton translocation, and thus conserves the redox energy in a proton gradient. The sequence is that of NAD(P)H-quinone oxidoreductase subunit J, chloroplastic from Chloranthus spicatus (Chulantree).